The primary structure comprises 347 residues: UDP-N-acetylenolpyruvoylglucosamine reductase (347 aa).

An FAD-binding PCMH-type domain is found at 33 to 221 (AGGSAERIYL…SGAWFALPRD (189 aa)). Arg180 is a catalytic residue. Residue Ser250 is the Proton donor of the active site. The active site involves Glu320.

This sequence belongs to the MurB family. The cofactor is FAD.

The protein resides in the cytoplasm. It catalyses the reaction UDP-N-acetyl-alpha-D-muramate + NADP(+) = UDP-N-acetyl-3-O-(1-carboxyvinyl)-alpha-D-glucosamine + NADPH + H(+). The protein operates within cell wall biogenesis; peptidoglycan biosynthesis. In terms of biological role, cell wall formation. The protein is UDP-N-acetylenolpyruvoylglucosamine reductase of Nitrosospira multiformis (strain ATCC 25196 / NCIMB 11849 / C 71).